Here is a 788-residue protein sequence, read N- to C-terminus: Protein HHLF1 (788 aa).

3 disordered regions span residues 1-82, 366-385, and 609-663; these read MAQR…NFWH, TGTAAGTTSPPAASGTETEA, and IHKK…SRLP. Residues 16-25 are compositionally biased toward gly residues; it reads RGRGAGGPSG. The segment covering 26–56 has biased composition (low complexity); the sequence is VGSSPPSSCVPMGAPSTAGTGASAAATTTPG. An RNA-binding region spans residues 74-248; the sequence is SGNNSNFWHG…HGAGEVVRLY (175 aa). Positions 650 to 659 are enriched in basic and acidic residues; the sequence is LRRDDEDWKP. Residues 671–788 are interaction with host EIF2AK2/PKR; sequence LDETFWVLGS…IATHYHYNAQ (118 aa).

This sequence belongs to the herpesviridae US22 family. In terms of assembly, interacts with host EIF2AK2/PKR; this interaction retains EIF2AK2 to the host nucleus and prevents its activation. Interaction (via N-terminus) with host BECN1; this interaction inhibits host autophagy. Interacts with the viral DNA polymerase accessory subunit UL44. Interacts with host HSPA5.

It is found in the virion. Its subcellular location is the host cytoplasm. The protein localises to the host nucleus. Functionally, inhibits the establishment of the antiviral state and the integrated stress response (ISR) in the infected cell. Prevents the phosphorylation of the host eukaryotic translation initiation factor eIF-2alpha/EIF2S1 and thus the shutoff of viral and cellular protein synthesis by directly interacting with EIF2AK2/PKR. Prevents stress granule formation in response to eIF-2alpha/EIF2S1 phosphorylation, thereby rescuing viral replication and protein synthesis. Also inhibits host autophagy by interacting with host Beclin-1/BECN1. In Homo sapiens (Human), this protein is Protein HHLF1 (TRS1).